Consider the following 49-residue polypeptide: Large ribosomal subunit protein bL33 (49 aa).

This sequence belongs to the bacterial ribosomal protein bL33 family.

In Pseudothermotoga lettingae (strain ATCC BAA-301 / DSM 14385 / NBRC 107922 / TMO) (Thermotoga lettingae), this protein is Large ribosomal subunit protein bL33.